The sequence spans 108 residues: Virulence-associated protein I (108 aa).

The HTH cro/C1-type domain occupies 19–74; the sequence is LREEYLKPMGLSAHALAKALHVSPSRINEIVREQRGITADTALRLVRYFGGDAQSW. The segment at residues 30–49 is a DNA-binding region (H-T-H motif); sequence SAHALAKALHVSPSRINEIV.

It belongs to the VapA/VapI family.

In Dichelobacter nodosus (Bacteroides nodosus), this protein is Virulence-associated protein I (vapI).